The following is a 269-amino-acid chain: Histone deacetylase HDT1 (269 aa).

A disordered region spans residues 97 to 269; that stretch reads PFEEEEDDED…HSKAKHSAGK (173 aa). 2 stretches are compositionally biased toward acidic residues: residues 98 to 115 and 153 to 179; these read FEEE…DEDI and KDDE…DSEE. Over residues 228 to 238 the composition is skewed to polar residues; that stretch reads PSKQASKTPKS. The C2H2-type zinc-finger motif lies at 242 to 265; sequence HHCKPCNRSFGSEGALDSHSKAKH.

It belongs to the histone deacetylase HD2 family. Predominantly expressed in ovaries. Accumulates predominantly in the micropylar region of the ovule's integument.

The protein localises to the nucleus. It is found in the nucleolus. Its function is as follows. Mediates the deacetylation of lysine residues on the N-terminal part of the core histones (H2A, H2B, H3 and H4). Histone deacetylation gives a tag for epigenetic repression and plays an important role in transcriptional regulation, cell cycle progression and developmental events. This Solanum chacoense (Chaco potato) protein is Histone deacetylase HDT1 (HDT1).